We begin with the raw amino-acid sequence, 2144 residues long: Insulin-like receptor (2144 aa).

Positions 1 to 43 (MFNMPRGVTKSKSKRGKIKMENDMAAAATTTACTLGHICVLCR) are cleaved as a signal peptide. N-linked (GlcNAc...) asparagine glycosylation occurs at Asn-74. Residues 174 to 199 (RRQHQQQHHHHYQHHHQQHHQQHHQR) are compositionally biased toward basic residues. Residues 174–200 (RRQHQQQHHHHYQHHHQQHHQQHHQRQ) are disordered. Residue Asn-203 is glycosylated (N-linked (GlcNAc...) asparagine). Residues 229–256 (NYKQQQQLQHNQQLPRATPQQKQQEKDR) form a disordered region. Positions 232–242 (QQQQLQHNQQL) are enriched in low complexity. N-linked (GlcNAc...) asparagine glycans are attached at residues Asn-265, Asn-356, Asn-376, Asn-406, Asn-468, and Asn-509. Intrachain disulfides connect Cys-531/Cys-539, Cys-535/Cys-545, Cys-546/Cys-554, Cys-550/Cys-564, Cys-567/Cys-576, Cys-580/Cys-591, Cys-597/Cys-618, and Cys-635/Cys-638. Residues 542 to 586 (EHTCCSQDCLGGCVIDKNGNESCISCRNVSFNNICMDSCPKGYYQ) form an FU repeat. N-linked (GlcNAc...) asparagine glycans are attached at residues Asn-561 and Asn-569. 11 N-linked (GlcNAc...) asparagine glycosylation sites follow: Asn-751, Asn-810, Asn-824, Asn-839, Asn-864, Asn-898, Asn-946, Asn-1053, Asn-1147, Asn-1218, and Asn-1265. Fibronectin type-III domains are found at residues 825 to 927 (VTTK…TNPG) and 928 to 1026 (RPSK…EYDD). The segment at 1053–1084 (NGSSDKSDGAEGAALDSNAIPNGGATNPSRRR) is disordered. In terms of domain architecture, Fibronectin type-III 3 spans 1210 to 1305 (LKVDLEHANN…EVEHIKVEPP (96 aa)). The chain crosses the membrane as a helical span at residues 1311 to 1331 (VFFWLLGIGLAFLIVSLFGYV). Residues 1332-2144 (CYLHKRKVPS…PPNGFIGREA (813 aa)) lie on the Cytoplasmic side of the membrane. The tract at residues 1351-1354 (NPFY) is chico-binding. Tyr-1354 carries the post-translational modification Phosphotyrosine; by autocatalysis. One can recognise a Protein kinase domain in the interval 1371-1659 (IIQLAPLGQG…LEPQCPNSQF (289 aa)). ATP-binding positions include 1377–1385 (LGQGSFGMV) and Lys-1405. Asp-1519 functions as the Proton acceptor in the catalytic mechanism. Phosphotyrosine; by autocatalysis occurs at positions 1545, 1549, and 1550. Disordered regions lie at residues 1690–1724 (VPLD…DQPP), 1788–1871 (RGYE…KKTV), 1886–1962 (LFNH…ISDN), and 2020–2144 (ISHN…GREA). Ser-1816 carries the phosphoserine modification. 2 stretches are compositionally biased toward low complexity: residues 1849 to 1860 (STASAGSSNASS) and 1894 to 1916 (SNAS…NLTS). Over residues 2042–2062 (SDEDNEQEEDDEDEDDDVDDE) the composition is skewed to acidic residues. The span at 2063–2073 (HVEHIKMERMP) shows a compositional bias: basic and acidic residues. Residues 2084–2120 (SKTQPPRSRSVSQTRKSPTNPNSGIGATGAGNRSNLL) show a composition bias toward polar residues.

It belongs to the protein kinase superfamily. Tyr protein kinase family. Insulin receptor subfamily. As to quaternary structure, tetramer of 2 alpha and 2 beta chains linked by disulfide bonds. The alpha chains contribute to the formation of the ligand-binding domain, while the beta chains carry the kinase domain. Interacts (via C-terminal cytoplasmic region) with dock/dreadlocks (via SH2 and SH3 domains); when autophosphorylated. May interact (via beta subunit) with chico/IRS-1; this interaction may lead to tyrosine phosphorylation of the insulin receptor substrate chico. Interacts with Elp6; the interaction may stabilize Elp6. Requires Mn(2+) as cofactor. The 280 kDa proreceptor is proteolytically processed to form a 120 kDa alpha subunit and a 170 kDa beta subunit. The beta subunit undergoes cell-specific cleavage to generate a 90 kDa beta subunit and a free 60 kDa C-terminal subunit. Both the 90 kDa and the 170 kDa beta subunits can assemble with the alpha subunits to form mature receptors. Post-translationally, autophosphorylated on tyrosine residues, including Tyr-1549 and Tyr-1550, in response to exogenous insulin. Tyr-1549 and Tyr-1550 are dephosphorylated by Ptp61F recruited by the dock/dreadlocks adapter protein. In terms of processing, phosphorylation of Tyr-1354 is required for Chico-binding.

Its subcellular location is the membrane. The protein resides in the cell projection. The protein localises to the axon. It is found in the growth cone membrane. It carries out the reaction L-tyrosyl-[protein] + ATP = O-phospho-L-tyrosyl-[protein] + ADP + H(+). Activated in response to insulin. Autophosphorylation activates the kinase activity. Functionally, has a ligand-stimulated tyrosine-protein kinase activity. Binds 3 insulin-like peptide ligands. Regulates cell number and cell size during development by regulating cell growth and survival, affecting body size and organ size, including ovaries and imaginal disks. Plays a role in life-span determination. May be involved in regulation of other neuroendocrine signaling pathways. Involved in the development of the embryonic nervous system. Functions upstream of dock/dreadlocks for photoreceptor (R cell) axon guidance and targeting in the visual system. Involved in the acs mediated recovery of gut enterocytes following the cytoplasmic purge response to intestinal bacterial infection. The sequence is that of Insulin-like receptor from Drosophila melanogaster (Fruit fly).